Reading from the N-terminus, the 355-residue chain is Inositol-tetrakisphosphate 1-kinase 4 (355 aa).

Lys65 is a binding site for 1D-myo-inositol 1,3,4-trisphosphate. Positions 101 and 146 each coordinate ATP. Positions 107–318 constitute an ATP-grasp domain; that stretch reads VVSGLRTPVS…FFLEMLRGTR (212 aa). The 1D-myo-inositol 1,3,4-trisphosphate site is built by His157 and Lys190. Residues 179–190 and Ser205 each bind ATP; that span reads QEFVNHGGVLFK. A disordered region spans residues 225–248; the sequence is FANISNQPLPPPDDDGGAADDDTP. The span at 236–247 shows a compositional bias: acidic residues; that stretch reads PDDDGGAADDDT. Mg(2+) is bound by residues Asp272, Asp289, and Asn291. Asn291 provides a ligand contact to 1D-myo-inositol 1,3,4-trisphosphate.

It belongs to the ITPK1 family. In terms of assembly, monomer. Requires Mg(2+) as cofactor.

The catalysed reaction is 1D-myo-inositol 3,4,5,6-tetrakisphosphate + ATP = 1D-myo-inositol 1,3,4,5,6-pentakisphosphate + ADP + H(+). It carries out the reaction 1D-myo-inositol 1,3,4-trisphosphate + ATP = 1D-myo-inositol 1,3,4,5-tetrakisphosphate + ADP + H(+). The enzyme catalyses 1D-myo-inositol 1,3,4-trisphosphate + ATP = 1D-myo-inositol 1,3,4,6-tetrakisphosphate + ADP + H(+). Its function is as follows. Kinase that can phosphorylate various inositol polyphosphate such as Ins(3,4,5,6)P4 or Ins(1,3,4)P3 and participates in phytic acid biosynthesis in developing seeds. Phytic acid is the primary storage form of phosphorus in cereal grains and other plant seeds. The protein is Inositol-tetrakisphosphate 1-kinase 4 (ITPK4) of Oryza sativa subsp. indica (Rice).